The following is a 120-amino-acid chain: Large ribosomal subunit protein bL12 (120 aa).

It belongs to the bacterial ribosomal protein bL12 family. In terms of assembly, homodimer. Part of the ribosomal stalk of the 50S ribosomal subunit. Forms a multimeric L10(L12)X complex, where L10 forms an elongated spine to which 2 to 4 L12 dimers bind in a sequential fashion. Binds GTP-bound translation factors.

Forms part of the ribosomal stalk which helps the ribosome interact with GTP-bound translation factors. Is thus essential for accurate translation. This Brevibacillus brevis (strain 47 / JCM 6285 / NBRC 100599) protein is Large ribosomal subunit protein bL12.